The chain runs to 108 residues: MEQFECITVEEAYQKLRQGAAVLVDIRDPQSYAMGHAPQAFHLTNDTLGAFMRKHGFDTAVMVMCYHGNSSKGAAQYLLQQGYDAVYSIDGGFEAWHRRFPANVANGA.

Positions 17–105 constitute a Rhodanese domain; the sequence is RQGAAVLVDI…WHRRFPANVA (89 aa). Residue Cys-65 is the Cysteine persulfide intermediate of the active site.

It belongs to the GlpE family.

It localises to the cytoplasm. The enzyme catalyses thiosulfate + hydrogen cyanide = thiocyanate + sulfite + 2 H(+). It catalyses the reaction thiosulfate + [thioredoxin]-dithiol = [thioredoxin]-disulfide + hydrogen sulfide + sulfite + 2 H(+). Transferase that catalyzes the transfer of sulfur from thiosulfate to thiophilic acceptors such as cyanide or dithiols. May function in a CysM-independent thiosulfate assimilation pathway by catalyzing the conversion of thiosulfate to sulfite, which can then be used for L-cysteine biosynthesis. This chain is Thiosulfate sulfurtransferase GlpE, found in Salmonella agona (strain SL483).